The following is a 99-amino-acid chain: IEVLLGGGDGSLAFVPNDFSIAKGEKIVFKNNAGFPHNVVFDEDEIPSGVDASKISMDENDLLNAAGETYEVALTEAGTYSFYCAPHQGAGMVGKVTVN.

In terms of domain architecture, Plastocyanin-like spans 1–99 (IEVLLGGGDG…AGMVGKVTVN (99 aa)). Histidine 37, cysteine 84, histidine 87, and methionine 92 together coordinate Cu cation.

It belongs to the plastocyanin family. Cu(2+) is required as a cofactor.

Its subcellular location is the plastid. It is found in the chloroplast thylakoid membrane. Participates in electron transfer between P700 and the cytochrome b6-f complex in photosystem I. This is Plastocyanin (PETE) from Capsella bursa-pastoris (Shepherd's purse).